The following is a 293-amino-acid chain: ATP synthase gamma chain (293 aa).

This sequence belongs to the ATPase gamma chain family. F-type ATPases have 2 components, CF(1) - the catalytic core - and CF(0) - the membrane proton channel. CF(1) has five subunits: alpha(3), beta(3), gamma(1), delta(1), epsilon(1). CF(0) has three main subunits: a, b and c.

It localises to the cell inner membrane. Its function is as follows. Produces ATP from ADP in the presence of a proton gradient across the membrane. The gamma chain is believed to be important in regulating ATPase activity and the flow of protons through the CF(0) complex. This chain is ATP synthase gamma chain, found in Leptothrix cholodnii (strain ATCC 51168 / LMG 8142 / SP-6) (Leptothrix discophora (strain SP-6)).